A 433-amino-acid polypeptide reads, in one-letter code: Homoserine dehydrogenase (433 aa).

NADPH-binding residues include threonine 12, valine 13, and lysine 102. Position 13 (valine 13) interacts with NAD(+). NADP(+) is bound by residues valine 13 and lysine 102. Positions 126, 129, 131, and 133 each coordinate Na(+). NADP(+)-binding residues include glycine 184 and glutamate 187. Positions 187 and 198 each coordinate L-homoserine. Lysine 202 serves as the catalytic Proton donor. Residue glycine 303 coordinates NADPH. Residue glycine 303 coordinates NAD(+). An NADP(+)-binding site is contributed by glycine 303. Residues 356–433 form the ACT domain; that stretch reads YCRFLCADVP…EIPSVIRVLS (78 aa).

This sequence belongs to the homoserine dehydrogenase family. A metal cation serves as cofactor.

It catalyses the reaction L-homoserine + NADP(+) = L-aspartate 4-semialdehyde + NADPH + H(+). The catalysed reaction is L-homoserine + NAD(+) = L-aspartate 4-semialdehyde + NADH + H(+). Its pathway is amino-acid biosynthesis; L-methionine biosynthesis via de novo pathway; L-homoserine from L-aspartate: step 3/3. It functions in the pathway amino-acid biosynthesis; L-threonine biosynthesis; L-threonine from L-aspartate: step 3/5. Its function is as follows. Catalyzes the conversion of L-aspartate-beta-semialdehyde (L-Asa) to L-homoserine (L-Hse), the third step in the biosynthesis of threonine and methionine from aspartate. The protein is Homoserine dehydrogenase (hom) of Synechocystis sp. (strain ATCC 27184 / PCC 6803 / Kazusa).